Consider the following 430-residue polypeptide: 3-phosphoshikimate 1-carboxyvinyltransferase (430 aa).

3-phosphoshikimate contacts are provided by Lys21, Ser22, and Arg26. Lys21 is a binding site for phosphoenolpyruvate. Positions 94 and 122 each coordinate phosphoenolpyruvate. 3-phosphoshikimate-binding residues include Ser167, Gln169, Asp317, and Lys344. Gln169 serves as a coordination point for phosphoenolpyruvate. Asp317 acts as the Proton acceptor in catalysis. Positions 348 and 390 each coordinate phosphoenolpyruvate.

This sequence belongs to the EPSP synthase family. Monomer.

The protein resides in the cytoplasm. It catalyses the reaction 3-phosphoshikimate + phosphoenolpyruvate = 5-O-(1-carboxyvinyl)-3-phosphoshikimate + phosphate. Its pathway is metabolic intermediate biosynthesis; chorismate biosynthesis; chorismate from D-erythrose 4-phosphate and phosphoenolpyruvate: step 6/7. Its function is as follows. Catalyzes the transfer of the enolpyruvyl moiety of phosphoenolpyruvate (PEP) to the 5-hydroxyl of shikimate-3-phosphate (S3P) to produce enolpyruvyl shikimate-3-phosphate and inorganic phosphate. The chain is 3-phosphoshikimate 1-carboxyvinyltransferase from Thermodesulfovibrio yellowstonii (strain ATCC 51303 / DSM 11347 / YP87).